Consider the following 425-residue polypeptide: Serine--tRNA ligase (425 aa).

An L-serine-binding site is contributed by 235-237 (TAE). 266 to 268 (RSE) provides a ligand contact to ATP. Glutamate 289 contributes to the L-serine binding site. 353–356 (EISS) lines the ATP pocket. Serine 389 is a binding site for L-serine.

The protein belongs to the class-II aminoacyl-tRNA synthetase family. Type-1 seryl-tRNA synthetase subfamily. As to quaternary structure, homodimer. The tRNA molecule binds across the dimer.

The protein localises to the cytoplasm. The enzyme catalyses tRNA(Ser) + L-serine + ATP = L-seryl-tRNA(Ser) + AMP + diphosphate + H(+). It catalyses the reaction tRNA(Sec) + L-serine + ATP = L-seryl-tRNA(Sec) + AMP + diphosphate + H(+). It participates in aminoacyl-tRNA biosynthesis; selenocysteinyl-tRNA(Sec) biosynthesis; L-seryl-tRNA(Sec) from L-serine and tRNA(Sec): step 1/1. Functionally, catalyzes the attachment of serine to tRNA(Ser). Is also able to aminoacylate tRNA(Sec) with serine, to form the misacylated tRNA L-seryl-tRNA(Sec), which will be further converted into selenocysteinyl-tRNA(Sec). The chain is Serine--tRNA ligase from Desulfotalea psychrophila (strain LSv54 / DSM 12343).